The following is a 276-amino-acid chain: Undecaprenyl-diphosphatase 2 (276 aa).

A run of 8 helical transmembrane segments spans residues 1–21 (MSLWFLVFLSVLQGVTELFPV), 44–64 (QLLPFLVALHLGTALALLWYF), 87–107 (GHLMWALIIGTIPTGIVGLLL), 114–134 (VFHDLRIVAIALIVNGVLLWL), 150–170 (MTFKQAFFVGLAQIGALIPGF), 190–210 (AAEFSFLLGTPIIFAAGVLEL), 222–242 (DALLGGVLTAIAAYLSVRFLM), and 251–271 (LASFGVYCVIAGVFCLGWFML).

Belongs to the UppP family.

The protein resides in the cell inner membrane. The catalysed reaction is di-trans,octa-cis-undecaprenyl diphosphate + H2O = di-trans,octa-cis-undecaprenyl phosphate + phosphate + H(+). Catalyzes the dephosphorylation of undecaprenyl diphosphate (UPP). Confers resistance to bacitracin. The sequence is that of Undecaprenyl-diphosphatase 2 from Burkholderia orbicola (strain AU 1054).